Consider the following 566-residue polypeptide: Phosphatidylinositol 4-kinase gamma 4 (566 aa).

Ubiquitin-like domains lie at 34-111 (TIMI…SDLQ) and 112-190 (VLDV…AKVR). The segment covering 250–263 (DGLKSGNSPVRSSE) has biased composition (polar residues). A disordered region spans residues 250 to 272 (DGLKSGNSPVRSSEGTGGAYFMQ). The PI3K/PI4K catalytic domain occupies 255 to 547 (GNSPVRSSEG…AVLPGTSEAA (293 aa)). Residues 261–267 (SSEGTGG) are G-loop. ATP-binding positions include 262–268 (SEGTGGA), Lys284, and 374–377 (QMFT). The tract at residues 407-415 (ANADRHGGN) is catalytic loop. An activation loop region spans residues 430–456 (PIDHGYCLPESFEDCTFEWLYWPQARK). Asp432 is a binding site for ATP.

Belongs to the PI3/PI4-kinase family. Type II PI4K subfamily. Interacts with RPN10, UFD1 and CDC48 in vitro. Autophosphorylated.

It localises to the membrane. It carries out the reaction a 1,2-diacyl-sn-glycero-3-phospho-(1D-myo-inositol) + ATP = a 1,2-diacyl-sn-glycero-3-phospho-(1D-myo-inositol 4-phosphate) + ADP + H(+). In terms of biological role, the phosphorylation of phosphatidylinositol (PI) to PI4P is the first committed step in the generation of phosphatidylinositol 4,5-bisphosphate (PIP2), a precursor of the second messenger inositol 1,4,5-trisphosphate (InsP3). Undergoes autophosphorylation and phosphorylates serine/threonine residues of protein substrates. Phosphorylates RPN10 and UFD1 in vitro. In Arabidopsis thaliana (Mouse-ear cress), this protein is Phosphatidylinositol 4-kinase gamma 4.